The following is a 217-amino-acid chain: Small ribosomal subunit protein uS11m (217 aa).

The N-terminal 59 residues, 1–59, are a transit peptide targeting the mitochondrion; the sequence is MLLQPVWKGCRWTQFVRPIRRWNSTGTNRGVPFSFKDISNQEDITNISYPSSSDSVLTK.

This sequence belongs to the universal ribosomal protein uS11 family. As to quaternary structure, component of the mitochondrial small ribosomal subunit (mt-SSU). Mature yeast 74S mitochondrial ribosomes consist of a small (37S) and a large (54S) subunit. The 37S small subunit contains a 15S ribosomal RNA (15S mt-rRNA) and 34 different proteins. The 54S large subunit contains a 21S rRNA (21S mt-rRNA) and 46 different proteins.

It is found in the mitochondrion. Functionally, component of the mitochondrial ribosome (mitoribosome), a dedicated translation machinery responsible for the synthesis of mitochondrial genome-encoded proteins, including at least some of the essential transmembrane subunits of the mitochondrial respiratory chain. The mitoribosomes are attached to the mitochondrial inner membrane and translation products are cotranslationally integrated into the membrane. This is Small ribosomal subunit protein uS11m (MRPS18) from Saccharomyces cerevisiae (strain ATCC 204508 / S288c) (Baker's yeast).